We begin with the raw amino-acid sequence, 69 residues long: Small ribosomal subunit protein bS21 (69 aa).

Belongs to the bacterial ribosomal protein bS21 family.

The chain is Small ribosomal subunit protein bS21 from Borrelia duttonii (strain Ly).